The chain runs to 266 residues: tRNA pseudouridine synthase A (266 aa).

D53 acts as the Nucleophile in catalysis. Position 109 (Y109) interacts with substrate.

The protein belongs to the tRNA pseudouridine synthase TruA family.

The enzyme catalyses uridine(38/39/40) in tRNA = pseudouridine(38/39/40) in tRNA. Formation of pseudouridine at positions 38, 39 and 40 in the anticodon stem and loop of transfer RNAs. The protein is tRNA pseudouridine synthase A of Methanocella arvoryzae (strain DSM 22066 / NBRC 105507 / MRE50).